The primary structure comprises 115 residues: Large ribosomal subunit protein bL20 (115 aa).

It belongs to the bacterial ribosomal protein bL20 family.

Its function is as follows. Binds directly to 23S ribosomal RNA and is necessary for the in vitro assembly process of the 50S ribosomal subunit. It is not involved in the protein synthesizing functions of that subunit. The polypeptide is Large ribosomal subunit protein bL20 (Parasynechococcus marenigrum (strain WH8102)).